The following is a 176-amino-acid chain: dCTP deaminase (176 aa).

DCTP contacts are provided by residues 102–107 (RSTFAR) and D118. The Proton donor/acceptor role is filled by E128. DCTP contacts are provided by Y160, K166, and Q167.

This sequence belongs to the dCTP deaminase family. Homotrimer.

It carries out the reaction dCTP + H2O + H(+) = dUTP + NH4(+). It participates in pyrimidine metabolism; dUMP biosynthesis; dUMP from dCTP (dUTP route): step 1/2. Catalyzes the deamination of dCTP to dUTP. This is dCTP deaminase from Staphylothermus marinus (strain ATCC 43588 / DSM 3639 / JCM 9404 / F1).